The primary structure comprises 327 residues: MIYLIIILLKFQKNLYDLLYSVIIKEDYLRNINGILLLDKPIGLSSNLILQKIKKLFKAKKAGYIGTLDPIASGMLPIFFGDATKFSDYLLNTNKWYKIKAKLGEKTNTLDSFGKIICIRPILNIKKLNIEKILSEFQGEIYQKPPMFSSLKHLGKPLYKYARQGIYIPREKRKVYVHYIKLLSFSKKYFSLTIKCSKGTYVRSIVDDIGEKLFCGAHIVKLRRTKLFNYKESHMIDSNKLYNIKKKFNDLKKLDECLLPIESIFKKLPIIVVNDDIINRLRNGIKLNFWKIKKNNLFKIISKDTKKFVGIIDINKYGRANSIKLIK.

The active-site Nucleophile is the Asp69. Positions 97, 201, and 222 each coordinate substrate.

It belongs to the pseudouridine synthase TruB family. Type 1 subfamily.

The enzyme catalyses uridine(55) in tRNA = pseudouridine(55) in tRNA. Functionally, responsible for synthesis of pseudouridine from uracil-55 in the psi GC loop of transfer RNAs. This Wigglesworthia glossinidia brevipalpis protein is tRNA pseudouridine synthase B.